The primary structure comprises 273 residues: 4-hydroxy-tetrahydrodipicolinate reductase (273 aa).

NAD(+) contacts are provided by residues 12-17 (GAGGRM) and glutamate 38. Arginine 39 contacts NADP(+). NAD(+) is bound by residues 102–104 (GTT) and 126–129 (AANF). Residue histidine 159 is the Proton donor/acceptor of the active site. (S)-2,3,4,5-tetrahydrodipicolinate is bound at residue histidine 160. Lysine 163 serves as the catalytic Proton donor. 169–170 (GT) serves as a coordination point for (S)-2,3,4,5-tetrahydrodipicolinate.

This sequence belongs to the DapB family. In terms of assembly, homotetramer.

It is found in the cytoplasm. The enzyme catalyses (S)-2,3,4,5-tetrahydrodipicolinate + NAD(+) + H2O = (2S,4S)-4-hydroxy-2,3,4,5-tetrahydrodipicolinate + NADH + H(+). It catalyses the reaction (S)-2,3,4,5-tetrahydrodipicolinate + NADP(+) + H2O = (2S,4S)-4-hydroxy-2,3,4,5-tetrahydrodipicolinate + NADPH + H(+). It functions in the pathway amino-acid biosynthesis; L-lysine biosynthesis via DAP pathway; (S)-tetrahydrodipicolinate from L-aspartate: step 4/4. Catalyzes the conversion of 4-hydroxy-tetrahydrodipicolinate (HTPA) to tetrahydrodipicolinate. The sequence is that of 4-hydroxy-tetrahydrodipicolinate reductase from Escherichia coli O139:H28 (strain E24377A / ETEC).